Reading from the N-terminus, the 367-residue chain is MSLRRIMVTAVRNLHPVTLSPSPRINILYGANGSGKTSVLEAVHLLGLARSFRSTRLNPVIQYEQAACTVFGEVQLSEGGTSNLGVSRERAGDFTIRIDGQNAKSAAQLAELLPLQLINPDSFRLLEGAPKIRRQFLDWGVFHVEPRFMPAWQRLQKALRQRNSWLRHGTLDPASQAAWDRELCLASAEIDEYRRNYIKALKPVFEQTLSELVELDGLTLSYYRGWDKDRELNEVLASSLLRDQQMGHTQAGPQRADLRLRLAANNAADILSRGQQKLVVCALRIAQGHLVSQARRGHCIYLVDDLPSELDDQHRRALCRLLEELRCQVFITCVDHELLREGWQTETPVALFHVEQGRITQTHDHRE.

30–37 (GANGSGKT) is a binding site for ATP.

It belongs to the RecF family.

The protein localises to the cytoplasm. In terms of biological role, the RecF protein is involved in DNA metabolism; it is required for DNA replication and normal SOS inducibility. RecF binds preferentially to single-stranded, linear DNA. It also seems to bind ATP. This is DNA replication and repair protein RecF from Pseudomonas putida (strain W619).